A 98-amino-acid polypeptide reads, in one-letter code: MAVSNNNNNNNSKERTQNIKEVEEKLGENPKITLKGGGKTKIMDFEQLRKPHCVRPSARFPVEDTAGGLLRTGGHRPQISDEEVSKRHHEQSHGQEDH.

The interval Ala58–His98 is disordered.

This is an uncharacterized protein from Saccharomyces cerevisiae (strain ATCC 204508 / S288c) (Baker's yeast).